Consider the following 813-residue polypeptide: Leucine--tRNA ligase (813 aa).

Positions 42 to 52 match the 'HIGH' region motif; that stretch reads PYTSGNLHIGH. Positions 580-584 match the 'KMSKS' region motif; the sequence is KMSKS. K583 provides a ligand contact to ATP.

This sequence belongs to the class-I aminoacyl-tRNA synthetase family.

It localises to the cytoplasm. The catalysed reaction is tRNA(Leu) + L-leucine + ATP = L-leucyl-tRNA(Leu) + AMP + diphosphate. In Dehalococcoides mccartyi (strain ATCC BAA-2266 / KCTC 15142 / 195) (Dehalococcoides ethenogenes (strain 195)), this protein is Leucine--tRNA ligase.